A 365-amino-acid chain; its full sequence is Histidinol-phosphate aminotransferase (365 aa).

An N6-(pyridoxal phosphate)lysine modification is found at Lys-220.

It belongs to the class-II pyridoxal-phosphate-dependent aminotransferase family. Histidinol-phosphate aminotransferase subfamily. As to quaternary structure, homodimer. The cofactor is pyridoxal 5'-phosphate.

The catalysed reaction is L-histidinol phosphate + 2-oxoglutarate = 3-(imidazol-4-yl)-2-oxopropyl phosphate + L-glutamate. Its pathway is amino-acid biosynthesis; L-histidine biosynthesis; L-histidine from 5-phospho-alpha-D-ribose 1-diphosphate: step 7/9. The sequence is that of Histidinol-phosphate aminotransferase from Neisseria meningitidis serogroup B (strain ATCC BAA-335 / MC58).